We begin with the raw amino-acid sequence, 318 residues long: Small ribosomal subunit protein mS26 (318 aa).

The disordered stretch occupies residues 295–318; that stretch reads IDSKLNPTSNGAGNNGNNNNTTNL. The span at 300 to 318 shows a compositional bias: low complexity; sequence NPTSNGAGNNGNNNNTTNL.

It belongs to the mitochondrion-specific ribosomal protein mS26 family. Component of the mitochondrial small ribosomal subunit (mt-SSU). Mature yeast 74S mitochondrial ribosomes consist of a small (37S) and a large (54S) subunit. The 37S small subunit contains a 15S ribosomal RNA (15S mt-rRNA) and 34 different proteins. The 54S large subunit contains a 21S rRNA (21S mt-rRNA) and 46 different proteins.

The protein resides in the mitochondrion. Component of the mitochondrial ribosome (mitoribosome), a dedicated translation machinery responsible for the synthesis of mitochondrial genome-encoded proteins, including at least some of the essential transmembrane subunits of the mitochondrial respiratory chain. The mitoribosomes are attached to the mitochondrial inner membrane and translation products are cotranslationally integrated into the membrane. The protein is Small ribosomal subunit protein mS26 (PET123) of Saccharomyces cerevisiae (strain ATCC 204508 / S288c) (Baker's yeast).